A 523-amino-acid polypeptide reads, in one-letter code: Uridylate cyclase (523 aa).

Guanylate cyclase domains follow at residues 69–209 (VHVY…AKLA) and 318–438 (MSIF…IGIR). A ribonucleoside 5'-triphosphate is bound by residues Tyr72 and Arg125. Mn(2+) is bound by residues Asp323, Ile324, and Asp372.

Belongs to the adenylyl cyclase class-4/guanylyl cyclase family. Pyrimidine cyclase subfamily. As to quaternary structure, monomer. Mn(2+) is required as a cofactor.

The protein resides in the cytoplasm. The enzyme catalyses UTP = 3',5'-cyclic UMP + diphosphate. Functionally, pycsar (pyrimidine cyclase system for antiphage resistance) provides immunity against bacteriophage. The pyrimidine cyclase (PycC) synthesizes cyclic nucleotides in response to infection; these serve as specific second messenger signals. The signals activate the nearby effector, leading to bacterial cell death and abortive phage infection. A clade A Pycsar system. The pyrimidine cyclase gene of a two-gene Pycsar system, generates cyclic UMP (cUMP) from UTP, has little to no activity on ATP, CTP or GTP. Expression of this and effector RsPycTM (AC A0A4R2UGS4) probably confers resistance to some bacteriophage. The genes are probably only expressed in response to bacteriophage infection. The chain is Uridylate cyclase from Rhizobium sp. (strain PP-F2F-G36).